The chain runs to 246 residues: Probable phosphatase Ssed_2939 (246 aa).

H8, H10, H16, H41, E74, H102, H132, D193, and H195 together coordinate Zn(2+).

This sequence belongs to the PHP family. Zn(2+) is required as a cofactor.

The sequence is that of Probable phosphatase Ssed_2939 from Shewanella sediminis (strain HAW-EB3).